The chain runs to 505 residues: MAEIYPSLVQCAIVATAFKVLLFPAYKSTDFEVHRNWLAITHSLPLWEWYYEKTSEWTLDYPPFFAYFEWIMSQVARLADPAMIWVHNLEYDSWQTVYFQRWTVIVTELVLLYALQMFVDSTPGVSKRAAHAAAVSILLSPGLLIIDHIHFQYNGVMYGILIASLVLAKKKSSLLASGLVFAALLCMKHIYLYLAPAYFVYLLRVYCLPPKLSPRSIFRIQFFNCVKLGGGIAAIFAAAFGPFALKNQIPQIFSRLFPFSRGLCHAYWAPNVWALYSFMDRLLISLAPRIGLPIKADALNSVTRGLVGDTSFAVLPDITPRMCFVLTLLFQAIPLIKLFMRPTWEGFIGGVTLCGYASFLFGWHVHEKAILLVIIPFSLIALKDRRYLGAFRPLAVAGHVSLFPLIFTPAEFPIKTVYTIFWLVLFLMAFDRLAPAPTRQRLFLFDRFSTAYITVSIPLIFYCSLMHGIIFGKSYEFLPLMFTSSYSAIGVVGSWLGFMVVYFTE.

Over Met-1–Glu-3 the chain is Lumenal. The helical transmembrane segment at Ile-4–Pro-24 threads the bilayer. Topologically, residues Ala-25 to Arg-101 are cytoplasmic. Residues Trp-102 to Thr-122 form a helical membrane-spanning segment. The Lumenal segment spans residues Pro-123–Arg-128. The helical transmembrane segment at Ala-129–Ile-149 threads the bilayer. Over His-150 to Gln-152 the chain is Cytoplasmic. A helical membrane pass occupies residues Tyr-153–Lys-169. The Lumenal segment spans residues Lys-170 to Ser-173. The chain crosses the membrane as a helical span at residues Leu-174 to Leu-194. The Cytoplasmic portion of the chain corresponds to Ala-195–Asn-224. A helical transmembrane segment spans residues Cys-225 to Leu-245. Topologically, residues Lys-246 to Thr-319 are lumenal. Residues Pro-320–Met-340 form a helical membrane-spanning segment. The Cytoplasmic portion of the chain corresponds to Arg-341–Phe-359. A helical transmembrane segment spans residues Leu-360–Ile-380. Residues Ala-381–Arg-386 lie on the Lumenal side of the membrane. The helical transmembrane segment at Tyr-387–Phe-407 threads the bilayer. At Thr-408 to Pro-409 the chain is on the cytoplasmic side. A helical transmembrane segment spans residues Ala-410–Phe-430. Residues Asp-431 to Thr-450 are Lumenal-facing. A helical transmembrane segment spans residues Ala-451–Phe-471. At Gly-472–Leu-480 the chain is on the cytoplasmic side. The chain crosses the membrane as a helical span at residues Met-481–Val-501. Residues Tyr-502 to Glu-505 are Lumenal-facing.

It belongs to the ALG6/ALG8 glucosyltransferase family.

The protein localises to the endoplasmic reticulum membrane. It carries out the reaction an alpha-D-Glc-(1-&gt;3)-alpha-D-Man-(1-&gt;2)-alpha-D-Man-(1-&gt;2)-alpha-D-Man-(1-&gt;3)-[alpha-D-Man-(1-&gt;2)-alpha-D-Man-(1-&gt;3)-[alpha-D-Man-(1-&gt;2)-alpha-D-Man-(1-&gt;6)]-alpha-D-Man-(1-&gt;6)]-beta-D-Man-(1-&gt;4)-beta-D-GlcNAc-(1-&gt;4)-alpha-D-GlcNAc-diphospho-di-trans,poly-cis-dolichol + a di-trans,poly-cis-dolichyl beta-D-glucosyl phosphate = an alpha-D-Glc-(1-&gt;3)-alpha-D-Glc-(1-&gt;3)-alpha-D-Man-(1-&gt;2)-alpha-D-Man-(1-&gt;2)-alpha-D-Man-(1-&gt;3)-[alpha-D-Man-(1-&gt;2)-alpha-D-Man-(1-&gt;3)-[alpha-D-Man-(1-&gt;2)-alpha-D-Man-(1-&gt;6)]-alpha-D-Man-(1-&gt;6)]-beta-D-Man-(1-&gt;4)-beta-D-GlcNAc-(1-&gt;4)-alpha-D-GlcNAc-diphospho-di-trans,poly-cis-dolichol + a di-trans,poly-cis-dolichyl phosphate + H(+). It participates in protein modification; protein glycosylation. Functionally, dolichyl pyrophosphate Glc1Man9GlcNAc2 alpha-1,3-glucosyltransferase that operates in the biosynthetic pathway of dolichol-linked oligosaccharides, the glycan precursors employed in protein asparagine (N)-glycosylation. The assembly of dolichol-linked oligosaccharides begins on the cytosolic side of the endoplasmic reticulum membrane and finishes in its lumen. The sequential addition of sugars to dolichol pyrophosphate produces dolichol-linked oligosaccharides containing fourteen sugars, including two GlcNAcs, nine mannoses and three glucoses. Once assembled, the oligosaccharide is transferred from the lipid to nascent proteins by oligosaccharyltransferases. In the lumen of the endoplasmic reticulum, adds the second glucose residue from dolichyl phosphate glucose (Dol-P-Glc) onto the lipid-linked oligosaccharide intermediate Glc(1)Man(9)GlcNAc(2)-PP-Dol to produce Glc(2)Man(9)GlcNAc(2)-PP-Dol. The protein is Dolichyl pyrophosphate Glc1Man9GlcNAc2 alpha-1,3-glucosyltransferase (alg-8) of Neurospora crassa (strain ATCC 24698 / 74-OR23-1A / CBS 708.71 / DSM 1257 / FGSC 987).